The following is a 224-amino-acid chain: MLITGFPAGLLACNCYVLAERPGTDAVIVDPGQGAMGTLRRILDKNRLTPAAVLLTHGHIDHIWSAQKVSDTFGCPTYVHPADRFMLTDPIYGLGPRIAQLVAGAFFREPKQVVELDRDGDKIDLGGISVNIDHTPGHTRGSVVFRVLQATNNDKDIVFTGDTLFERAIGRTDLAGGSGRDLLRSIVDKLLVLDDSTVVLPGHGNSTTIGAERRFNPFLEGLSR.

His57, His59, Asp61, His62, His138, Asp162, and His203 together coordinate Zn(2+).

This sequence belongs to the metallo-beta-lactamase superfamily. Glyoxalase II family. It depends on Zn(2+) as a cofactor.

This is an uncharacterized protein from Mycobacterium tuberculosis (strain CDC 1551 / Oshkosh).